The primary structure comprises 207 residues: Small ribosomal subunit protein uS4 (207 aa).

An S4 RNA-binding domain is found at 96–159 (RRLDNVVYRL…RASTFIADNI (64 aa)).

Belongs to the universal ribosomal protein uS4 family. Part of the 30S ribosomal subunit. Contacts protein S5. The interaction surface between S4 and S5 is involved in control of translational fidelity.

Functionally, one of the primary rRNA binding proteins, it binds directly to 16S rRNA where it nucleates assembly of the body of the 30S subunit. Its function is as follows. With S5 and S12 plays an important role in translational accuracy. The protein is Small ribosomal subunit protein uS4 of Leptospira borgpetersenii serovar Hardjo-bovis (strain JB197).